The chain runs to 278 residues: Probable cytochrome c oxidase subunit 3 (278 aa).

The next 6 helical transmembrane spans lie at 21 to 41, 46 to 66, 89 to 109, 174 to 194, 212 to 232, and 256 to 276; these read PWPV…VSFM, FNIY…YSWW, IGMA…FASF, CVTA…MQAY, FYLA…FLIV, and AWYW…VYIF.

It belongs to the cytochrome c oxidase subunit 3 family.

It is found in the cell membrane. It carries out the reaction 4 Fe(II)-[cytochrome c] + O2 + 8 H(+)(in) = 4 Fe(III)-[cytochrome c] + 2 H2O + 4 H(+)(out). This is Probable cytochrome c oxidase subunit 3 (ctaE) from Rickettsia felis (strain ATCC VR-1525 / URRWXCal2) (Rickettsia azadi).